The chain runs to 388 residues: Phosphopentomutase (388 aa).

Aspartate 11, aspartate 283, histidine 288, aspartate 324, histidine 325, and histidine 336 together coordinate Mn(2+).

Belongs to the phosphopentomutase family. Requires Mn(2+) as cofactor.

The protein resides in the cytoplasm. The enzyme catalyses 2-deoxy-alpha-D-ribose 1-phosphate = 2-deoxy-D-ribose 5-phosphate. It catalyses the reaction alpha-D-ribose 1-phosphate = D-ribose 5-phosphate. It functions in the pathway carbohydrate degradation; 2-deoxy-D-ribose 1-phosphate degradation; D-glyceraldehyde 3-phosphate and acetaldehyde from 2-deoxy-alpha-D-ribose 1-phosphate: step 1/2. Functionally, isomerase that catalyzes the conversion of deoxy-ribose 1-phosphate (dRib-1-P) and ribose 1-phosphate (Rib-1-P) to deoxy-ribose 5-phosphate (dRib-5-P) and ribose 5-phosphate (Rib-5-P), respectively. The sequence is that of Phosphopentomutase from Anaeromyxobacter dehalogenans (strain 2CP-1 / ATCC BAA-258).